The sequence spans 353 residues: Ferredoxin--NADP reductase (353 aa).

Thr-25, Glu-44, Gln-52, Tyr-57, Val-97, Phe-132, Asp-298, and Ser-339 together coordinate FAD.

Belongs to the ferredoxin--NADP reductase type 2 family. In terms of assembly, homodimer. The cofactor is FAD.

It catalyses the reaction 2 reduced [2Fe-2S]-[ferredoxin] + NADP(+) + H(+) = 2 oxidized [2Fe-2S]-[ferredoxin] + NADPH. In Chlorobium phaeovibrioides (strain DSM 265 / 1930) (Prosthecochloris vibrioformis (strain DSM 265)), this protein is Ferredoxin--NADP reductase.